A 487-amino-acid chain; its full sequence is Glutamyl-tRNA(Gln) amidotransferase subunit A (487 aa).

Catalysis depends on charge relay system residues Lys-79 and Ser-158. The Acyl-ester intermediate role is filled by Ser-182.

The protein belongs to the amidase family. GatA subfamily. In terms of assembly, heterotrimer of A, B and C subunits.

It carries out the reaction L-glutamyl-tRNA(Gln) + L-glutamine + ATP + H2O = L-glutaminyl-tRNA(Gln) + L-glutamate + ADP + phosphate + H(+). In terms of biological role, allows the formation of correctly charged Gln-tRNA(Gln) through the transamidation of misacylated Glu-tRNA(Gln) in organisms which lack glutaminyl-tRNA synthetase. The reaction takes place in the presence of glutamine and ATP through an activated gamma-phospho-Glu-tRNA(Gln). This is Glutamyl-tRNA(Gln) amidotransferase subunit A from Ehrlichia ruminantium (strain Welgevonden).